Consider the following 21-residue polypeptide: Azemiopsin (21 aa).

The segment covering 1–14 (DNWWPKPPHQGPRP) has biased composition (pro residues). A disordered region spans residues 1 to 21 (DNWWPKPPHQGPRPPRPRPKP). Implicated in receptor binding stretches follow at residues 3–6 (WWPK), 8–11 (PHQG), and 13–14 (RP).

In terms of assembly, monomer. As to expression, expressed by the venom gland.

The protein resides in the secreted. In terms of biological role, in vitro, reversibly blocks human muscle-type nicotinic acetylcholine receptors (nAChR) alpha-1-beta-1-epsilon-delta/CHRNA1-CHRNB1-CHRNE-CHRND (EC(50)=0.44 uM) and alpha-1-beta-1-gamma-delta/CHRNA1-CHRNB1-CHRNG-CHRND (EC(50)=1.56 uM). Binds to nAChR from T.californica (IC(50)=0.03-0.18 uM), human neuronal nAChR alpha-7/CHRNA7 (IC(50)=22 uM) and acetylcholine-binding proteins (AChBP) from L.stagnalis (IC(50)=63 uM) and A.californica (IC(50)=230 uM). The chain is Azemiopsin from Azemiops feae (Fea's viper).